We begin with the raw amino-acid sequence, 277 residues long: Large ribosomal subunit protein uL2 (277 aa).

The tract at residues 222-277 (GVAMNPVDHPHGGGEGRTSGGRHPVTPWGKPTKGKKTRSNKATDKFIMRSRHQRKK) is disordered.

Belongs to the universal ribosomal protein uL2 family. In terms of assembly, part of the 50S ribosomal subunit. Forms a bridge to the 30S subunit in the 70S ribosome.

One of the primary rRNA binding proteins. Required for association of the 30S and 50S subunits to form the 70S ribosome, for tRNA binding and peptide bond formation. It has been suggested to have peptidyltransferase activity; this is somewhat controversial. Makes several contacts with the 16S rRNA in the 70S ribosome. This chain is Large ribosomal subunit protein uL2, found in Brucella melitensis biotype 1 (strain ATCC 23456 / CCUG 17765 / NCTC 10094 / 16M).